We begin with the raw amino-acid sequence, 321 residues long: Genome polyprotein (321 aa).

The Cytoplasmic portion of the chain corresponds to 1–52; it reads RNLGKVIDTLTCGFADLMGYIPLVGAPLGGAARALAHGVRVLEDGVNYATGN. Positions 6–57 are interaction with APOA2; sequence VIDTLTCGFADLMGYIPLVGAPLGGAARALAHGVRVLEDGVNYATGNLPGCS. An important for lipid droplets localization region spans residues 48–51; sequence YATG. The helical transmembrane segment at 53–73 threads the bilayer; that stretch reads LPGCSFSLFLLALLSCLTVPA. Residues 62 to 75 constitute a propeptide, ER anchor for the core protein, removed in mature form by host signal peptidase; the sequence is LLALLSCLTVPASA. At 74–242 the chain is on the lumenal side; it reads SAYQVRNSTG…AGAHWGVLAG (169 aa). N-linked (GlcNAc...) asparagine; by host glycans are attached at residues N80, N93, and N118. Positions 149 to 180 are important for fusion; that stretch reads LVGSATLCSALYVGDLCGSIFLVGQLFTFSPR. N-linked (GlcNAc...) asparagine; by host glycosylation occurs at N189. A helical transmembrane segment spans residues 243-263; it reads IAYFSMVGNWAKVLVVLLLFA. Over 264 to 321 the chain is Lumenal; that stretch reads GVDAETTVTGGSAAHGALGIASLFNQGARQNIQLINTNGSWHINSTALNCNDSLNTGW. The interval 268 to 294 is HVR1; sequence ETTVTGGSAAHGALGIASLFNQGARQN. N-linked (GlcNAc...) (high mannose) asparagine; by host glycosylation is found at N301, N307, and N314.

It belongs to the hepacivirus polyprotein family. In terms of assembly, homooligomer. Interacts with E1 (via C-terminus). Interacts with the non-structural protein 5A. Interacts (via N-terminus) with host STAT1 (via SH2 domain); this interaction results in decreased STAT1 phosphorylation and ubiquitin-mediated proteasome-dependent STAT1 degradation, leading to decreased IFN-stimulated gene transcription. Interacts with host STAT3; this interaction constitutively activates STAT3. Interacts with host LTBR receptor. Interacts with host TNFRSF1A receptor and possibly induces apoptosis. Interacts with host HNRPK. Interacts with host YWHAE. Interacts with host UBE3A/E6AP. Interacts with host DDX3X. Interacts with host APOA2. Interacts with host RXRA protein. Interacts with host SP110 isoform 3/Sp110b; this interaction sequesters the transcriptional corepressor SP110 away from the nucleus. Interacts with host CREB3 nuclear transcription protein; this interaction triggers cell transformation. Interacts with host ACY3. Interacts with host C1QR1. Interacts with host RBM24; this interaction, which enhances the interaction of the mature core protein with 5'-UTR, may inhibit viral translation and favor replication. Interacts with host EIF2AK2/PKR; this interaction induces the autophosphorylation of EIF2AK2. Part of the viral assembly initiation complex composed of NS2, E1, E2, NS3, NS4A, NS5A and the mature core protein. As to quaternary structure, forms a heterodimer with envelope glycoprotein E2. Interacts with mature core protein. Interacts with protease NS2. The heterodimer E1/E2 interacts with host CLDN1; this interaction plays a role in viral entry into host cell. Interacts with host SPSB2 (via C-terminus). Part of the viral assembly initiation complex composed of NS2, E1, E2, NS3, NS4A, NS5A and the mature core protein. Forms a heterodimer with envelope glycoprotein E1. Interacts with host CD81 and SCARB1 receptors; these interactions play a role in viral entry into host cell. Interacts with host EIF2AK2/PKR; this interaction inhibits EIF2AK2 and probably allows the virus to evade the innate immune response. Interacts with host CD209/DC-SIGN and CLEC4M/DC-SIGNR. Interact with host SPCS1; this interaction is essential for viral particle assembly. Interacts with protease NS2. The heterodimer E1/E2 interacts with host CLDN1; this interaction plays a role in viral entry into host cell. Part of the viral assembly initiation complex composed of NS2, E1, E2, NS3, NS4A, NS5A and the mature core protein. In terms of processing, specific enzymatic cleavages in vivo yield mature proteins. The structural proteins, core, E1, E2 and p7 are produced by proteolytic processing by host signal peptidases. The core protein precursor is synthesized as a 23 kDa, which is retained in the ER membrane through the hydrophobic signal peptide. Cleavage by the signal peptidase releases the 21 kDa mature core protein. The cleavage of the core protein precursor occurs between aminoacids 176 and 188 but the exact cleavage site is not known. Some degraded forms of the core protein appear as well during the course of infection. The other proteins (p7, NS2, NS3, NS4A, NS4B, NS5A and NS5B) are cleaved by the viral proteases. Autoprocessing between NS2 and NS3 is mediated by the NS2 cysteine protease catalytic domain and regulated by the NS3 N-terminal domain. Phosphorylated by host PKC and PKA. Post-translationally, ubiquitinated; mediated by UBE3A and leading to core protein subsequent proteasomal degradation. In terms of processing, highly N-glycosylated.

It localises to the host endoplasmic reticulum membrane. Its subcellular location is the host mitochondrion membrane. The protein resides in the virion. It is found in the host cytoplasm. The protein localises to the host nucleus. It localises to the host lipid droplet. Its subcellular location is the virion membrane. Functionally, packages viral RNA to form a viral nucleocapsid, and promotes virion budding. Participates in the viral particle production as a result of its interaction with the non-structural protein 5A. Binds RNA and may function as a RNA chaperone to induce the RNA structural rearrangements taking place during virus replication. Modulates viral translation initiation by interacting with viral IRES and 40S ribosomal subunit. Affects various cell signaling pathways, host immunity and lipid metabolism. Prevents the establishment of cellular antiviral state by blocking the interferon-alpha/beta (IFN-alpha/beta) and IFN-gamma signaling pathways and by blocking the formation of phosphorylated STAT1 and promoting ubiquitin-mediated proteasome-dependent degradation of STAT1. Activates STAT3 leading to cellular transformation. Regulates the activity of cellular genes, including c-myc and c-fos. May repress the promoter of p53, and sequester CREB3 and SP110 isoform 3/Sp110b in the cytoplasm. Represses cell cycle negative regulating factor CDKN1A, thereby interrupting an important check point of normal cell cycle regulation. Targets transcription factors involved in the regulation of inflammatory responses and in the immune response: suppresses TNF-induced NF-kappa-B activation, and activates AP-1. Binds to dendritic cells (DCs) via C1QR1, resulting in down-regulation of T-lymphocytes proliferation. Alters lipid metabolism by interacting with hepatocellular proteins involved in lipid accumulation and storage. Induces up-regulation of FAS promoter activity, and thereby contributes to the increased triglyceride accumulation in hepatocytes (steatosis). Forms a heterodimer with envelope glycoprotein E2, which mediates virus attachment to the host cell, virion internalization through clathrin-dependent endocytosis and fusion with host membrane. Fusion with the host cell is most likely mediated by both E1 and E2, through conformational rearrangements of the heterodimer required for fusion rather than a classical class II fusion mechanism. E1/E2 heterodimer binds host apolipoproteins such as APOB and ApoE thereby forming a lipo-viro-particle (LVP). APOE associated to the LVP allows the initial virus attachment to cell surface receptors such as the heparan sulfate proteoglycans (HSPGs), syndecan-1 (SDC1), syndecan-1 (SDC2), the low-density lipoprotein receptor (LDLR) and scavenger receptor class B type I (SCARB1). The cholesterol transfer activity of SCARB1 allows E2 exposure and binding of E2 to SCARB1 and the tetraspanin CD81. E1/E2 heterodimer binding on CD81 activates the epithelial growth factor receptor (EGFR) signaling pathway. Diffusion of the complex E1-E2-EGFR-SCARB1-CD81 to the cell lateral membrane allows further interaction with Claudin 1 (CLDN1) and occludin (OCLN) to finally trigger HCV entry. In terms of biological role, forms a heterodimer with envelope glycoprotein E1, which mediates virus attachment to the host cell, virion internalization through clathrin-dependent endocytosis and fusion with host membrane. Fusion with the host cell is most likely mediated by both E1 and E2, through conformational rearrangements of the heterodimer required for fusion rather than a classical class II fusion mechanism. The interaction between envelope glycoprotein E2 and host apolipoprotein E/APOE allows the proper assembly, maturation and infectivity of the viral particles. This interaction is probably promoted via the up-regulation of cellular autophagy by the virus. E1/E2 heterodimer binds host apolipoproteins such as APOB and APOE thereby forming a lipo-viro-particle (LVP). APOE associated to the LVP allows the initial virus attachment to cell surface receptors such as the heparan sulfate proteoglycans (HSPGs), syndecan-1 (SDC1), syndecan-1 (SDC2), the low-density lipoprotein receptor (LDLR) and scavenger receptor class B type I (SCARB1). The cholesterol transfer activity of SCARB1 allows E2 exposure and binding of E2 to SCARB1 and the tetraspanin CD81. E1/E2 heterodimer binding on CD81 activates the epithelial growth factor receptor (EGFR) signaling pathway. Diffusion of the complex E1-E2-EGFR-SCARB1-CD81 to the cell lateral membrane allows further interaction with Claudin 1 (CLDN1) and occludin (OCLN) to finally trigger HCV entry. Inhibits host EIF2AK2/PKR activation, preventing the establishment of an antiviral state. Viral ligand for CD209/DC-SIGN and CLEC4M/DC-SIGNR, which are respectively found on dendritic cells (DCs), and on liver sinusoidal endothelial cells and macrophage-like cells of lymph node sinuses. These interactions allow the capture of circulating HCV particles by these cells and subsequent facilitated transmission to permissive cells such as hepatocytes and lymphocyte subpopulations. This chain is Genome polyprotein, found in Homo sapiens (Human).